The following is a 232-amino-acid chain: Ubiquinone biosynthesis O-methyltransferase (232 aa).

The S-adenosyl-L-methionine site is built by Arg-36, Gly-55, Asp-76, and Met-120.

The protein belongs to the methyltransferase superfamily. UbiG/COQ3 family.

It catalyses the reaction a 3-demethylubiquinol + S-adenosyl-L-methionine = a ubiquinol + S-adenosyl-L-homocysteine + H(+). The catalysed reaction is a 3-(all-trans-polyprenyl)benzene-1,2-diol + S-adenosyl-L-methionine = a 2-methoxy-6-(all-trans-polyprenyl)phenol + S-adenosyl-L-homocysteine + H(+). It functions in the pathway cofactor biosynthesis; ubiquinone biosynthesis. O-methyltransferase that catalyzes the 2 O-methylation steps in the ubiquinone biosynthetic pathway. The sequence is that of Ubiquinone biosynthesis O-methyltransferase from Burkholderia lata (strain ATCC 17760 / DSM 23089 / LMG 22485 / NCIMB 9086 / R18194 / 383).